A 277-amino-acid polypeptide reads, in one-letter code: Glucose-6-phosphatase catalytic subunit 1 (277 aa).

A substrate-binding site is contributed by R4. 2 helical membrane passes run 39–59 (GHAM…LSIA) and 67–87 (LLYR…ELVV). The Proton donor role is filled by H40. Substrate is bound at residue R91. H97 acts as the Nucleophile in catalysis. Transmembrane regions (helical) follow at residues 131 to 151 (FLIT…LKAL), 215 to 235 (IGCI…TFSP), and 250 to 270 (AVAL…IYPV). Residues 274–277 (GKNL) carry the Prevents secretion from ER motif.

This sequence belongs to the glucose-6-phosphatase family.

The protein localises to the endoplasmic reticulum membrane. The catalysed reaction is D-glucose 6-phosphate + H2O = D-glucose + phosphate. Its pathway is carbohydrate biosynthesis; gluconeogenesis. Functionally, hydrolyzes glucose-6-phosphate to glucose in the endoplasmic reticulum. Forms with the glucose-6-phosphate transporter (SLC37A4/G6PT) the complex responsible for glucose production in the terminal step of glycogenolysis and gluconeogenesis. Hence, it is the key enzyme in homeostatic regulation of blood glucose levels. The sequence is that of Glucose-6-phosphatase catalytic subunit 1 (g6pc1) from Haplochromis xenognathus (Lake Victoria cichlid).